Consider the following 347-residue polypeptide: MNPIIFFMIMLTIILGTTIVMTSSHWLTVWMGFEMNMLAIIPMLMKNHHPRSTEAATKYFLTQATASMLLLLAITINLMSSGQWTVTNMINPTSSIILTIALAMKLGLAPFHFWVPEVTQGTPLSSGLILLTWQKLAPLSILLTMSPIINLDLLLMMGLLSVMIGGWGGLNQTQLRKIMAYSSIAHMGWMVTILIYNPTLTMLNLTIYIMMTLTMFMLLITTSTTTTLSLSHAWNKMPLITTMMLTTLLSMGGLPPLTGFMPKWMILQELTKNNSIILPTFMAITALLNLYFYMRLTYSTSLTMFPTTNATKIKWPFMTTKQMTYLSPLMVISTMTLPLTPMMMILH.

10 helical membrane passes run 1-21 (MNPI…TIVM), 25-45 (HWLT…PMLM), 59-79 (YFLT…INLM), 96-116 (IILT…FWVP), 148-168 (IINL…GGWG), 178-198 (IMAY…IYNP), 200-220 (LTML…MLLI), 237-257 (MPLI…LPPL), 274-294 (NSII…YFYM), and 326-346 (LSPL…MMIL).

It belongs to the complex I subunit 2 family. In terms of assembly, core subunit of respiratory chain NADH dehydrogenase (Complex I) which is composed of 45 different subunits. Interacts with TMEM242.

Its subcellular location is the mitochondrion inner membrane. It carries out the reaction a ubiquinone + NADH + 5 H(+)(in) = a ubiquinol + NAD(+) + 4 H(+)(out). In terms of biological role, core subunit of the mitochondrial membrane respiratory chain NADH dehydrogenase (Complex I) which catalyzes electron transfer from NADH through the respiratory chain, using ubiquinone as an electron acceptor. Essential for the catalytic activity and assembly of complex I. The protein is NADH-ubiquinone oxidoreductase chain 2 of Gardnerycteris crenulata (Striped hairy-nosed bat).